The following is a 320-amino-acid chain: Lipoyl synthase (320 aa).

[4Fe-4S] cluster is bound by residues Cys-67, Cys-72, Cys-78, Cys-93, Cys-97, Cys-100, and Ser-307. Positions 79–296 constitute a Radical SAM core domain; the sequence is FNHGTATFMI…RDKANEMGFE (218 aa).

This sequence belongs to the radical SAM superfamily. Lipoyl synthase family. Requires [4Fe-4S] cluster as cofactor.

It localises to the cytoplasm. The catalysed reaction is [[Fe-S] cluster scaffold protein carrying a second [4Fe-4S](2+) cluster] + N(6)-octanoyl-L-lysyl-[protein] + 2 oxidized [2Fe-2S]-[ferredoxin] + 2 S-adenosyl-L-methionine + 4 H(+) = [[Fe-S] cluster scaffold protein] + N(6)-[(R)-dihydrolipoyl]-L-lysyl-[protein] + 4 Fe(3+) + 2 hydrogen sulfide + 2 5'-deoxyadenosine + 2 L-methionine + 2 reduced [2Fe-2S]-[ferredoxin]. It functions in the pathway protein modification; protein lipoylation via endogenous pathway; protein N(6)-(lipoyl)lysine from octanoyl-[acyl-carrier-protein]: step 2/2. Functionally, catalyzes the radical-mediated insertion of two sulfur atoms into the C-6 and C-8 positions of the octanoyl moiety bound to the lipoyl domains of lipoate-dependent enzymes, thereby converting the octanoylated domains into lipoylated derivatives. The sequence is that of Lipoyl synthase from Haemophilus influenzae (strain PittGG).